The chain runs to 419 residues: Gamma-glutamyl phosphate reductase (419 aa).

The protein belongs to the gamma-glutamyl phosphate reductase family.

Its subcellular location is the cytoplasm. The catalysed reaction is L-glutamate 5-semialdehyde + phosphate + NADP(+) = L-glutamyl 5-phosphate + NADPH + H(+). It participates in amino-acid biosynthesis; L-proline biosynthesis; L-glutamate 5-semialdehyde from L-glutamate: step 2/2. Its function is as follows. Catalyzes the NADPH-dependent reduction of L-glutamate 5-phosphate into L-glutamate 5-semialdehyde and phosphate. The product spontaneously undergoes cyclization to form 1-pyrroline-5-carboxylate. This chain is Gamma-glutamyl phosphate reductase, found in Gloeobacter violaceus (strain ATCC 29082 / PCC 7421).